A 211-amino-acid chain; its full sequence is Uridine kinase (211 aa).

12 to 19 is an ATP binding site; sequence GGTGSGKT.

This sequence belongs to the uridine kinase family.

It localises to the cytoplasm. The enzyme catalyses uridine + ATP = UMP + ADP + H(+). It carries out the reaction cytidine + ATP = CMP + ADP + H(+). It functions in the pathway pyrimidine metabolism; CTP biosynthesis via salvage pathway; CTP from cytidine: step 1/3. It participates in pyrimidine metabolism; UMP biosynthesis via salvage pathway; UMP from uridine: step 1/1. The polypeptide is Uridine kinase (Halalkalibacterium halodurans (strain ATCC BAA-125 / DSM 18197 / FERM 7344 / JCM 9153 / C-125) (Bacillus halodurans)).